A 522-amino-acid chain; its full sequence is Probable G-protein coupled receptor egl-47 (522 aa).

Transmembrane regions (helical) follow at residues 140–160 (IIKL…NSFL), 184–204 (ASMI…LSAI), 238–258 (FVFF…KVVE), 276–296 (FILV…YHLY), 345–365 (PLLL…LYFL), 398–418 (ICWA…ICST), and 472–492 (LERT…LLLF).

It belongs to the G-protein coupled receptor family. As to expression, expressed in some neurons in the head, the HSN neurons and the PVQ interneurons of the tail.

It localises to the membrane. Orphan receptor. Regulates egg-laying probably by activating guanine nucleotide-binding protein goa-1, in the hermaphrodite-specific neurons (HSNs). The polypeptide is Probable G-protein coupled receptor egl-47 (Caenorhabditis elegans).